The sequence spans 462 residues: CUGBP Elav-like family member 3-B (462 aa).

3 RRM domains span residues 7–88 (IKLF…PADS), 95–175 (RKLF…FADT), and 377–455 (CNIF…LKRP).

It belongs to the CELF/BRUNOL family.

Its subcellular location is the nucleus. The protein localises to the cytoplasm. Functionally, RNA-binding protein that may be involved in the regulation of pre-mRNA alternative splicing. This chain is CUGBP Elav-like family member 3-B (tnrc4-b), found in Xenopus laevis (African clawed frog).